Consider the following 191-residue polypeptide: Protein GrpE (191 aa).

The span at 1–19 (MKDEHNQKHDHLSQKEPES) shows a compositional bias: basic and acidic residues. The interval 1 to 44 (MKDEHNQKHDHLSQKEPESYQKACACKEQQDEEMQEAGEKEGEI) is disordered.

This sequence belongs to the GrpE family. As to quaternary structure, homodimer.

The protein localises to the cytoplasm. Functionally, participates actively in the response to hyperosmotic and heat shock by preventing the aggregation of stress-denatured proteins, in association with DnaK and GrpE. It is the nucleotide exchange factor for DnaK and may function as a thermosensor. Unfolded proteins bind initially to DnaJ; upon interaction with the DnaJ-bound protein, DnaK hydrolyzes its bound ATP, resulting in the formation of a stable complex. GrpE releases ADP from DnaK; ATP binding to DnaK triggers the release of the substrate protein, thus completing the reaction cycle. Several rounds of ATP-dependent interactions between DnaJ, DnaK and GrpE are required for fully efficient folding. This is Protein GrpE from Helicobacter pylori (strain G27).